The sequence spans 94 residues: Large ribosomal subunit protein bL25 (94 aa).

It belongs to the bacterial ribosomal protein bL25 family. In terms of assembly, part of the 50S ribosomal subunit; part of the 5S rRNA/L5/L18/L25 subcomplex. Contacts the 5S rRNA. Binds to the 5S rRNA independently of L5 and L18.

Its function is as follows. This is one of the proteins that binds to the 5S RNA in the ribosome where it forms part of the central protuberance. The chain is Large ribosomal subunit protein bL25 from Proteus mirabilis (strain HI4320).